The primary structure comprises 1099 residues: Sodium/potassium/calcium exchanger 1 (1099 aa).

Residues 1–452 (MGKLIRMGPQ…DLFSVEERRQ (452 aa)) are Extracellular-facing. The segment covering 123–134 (PTTTKNNYSPTA) has biased composition (polar residues). Disordered stretches follow at residues 123–150 (PTTTKNNYSPTAAGTERRKEDTPTSSRT), 169–199 (TPRGEMKSYSPTQVREKVKYTPSPRGRRVGT), and 284–304 (PRRVESNSSAHPWGLVGKSNP). The N-linked (GlcNAc...) asparagine glycan is linked to asparagine 290. Residues 453–473 (GWVVLHVFGMMYVFVALAIVC) form a helical membrane-spanning segment. Residues 474–497 (DEYFVPALGVITDKLQISEDVAGA) are Cytoplasmic-facing. The stretch at 494–534 (VAGATFMAAGGSAPELFTSLIGVFISHSNVGIGTIVGSAVF) is one Alpha-1 repeat. The chain crosses the membrane as a helical span at residues 498-518 (TFMAAGGSAPELFTSLIGVFI). Residues 519–522 (SHSN) are Extracellular-facing. Residues 523 to 543 (VGIGTIVGSAVFNILFVIGTC) form a helical membrane-spanning segment. Residues 544-563 (SLFSREILNLTWWPLFRDVS) are Cytoplasmic-facing. Residues 564–584 (FYILDLIMLILFFLDSLIAWW) traverse the membrane as a helical segment. Residue glutamate 585 is a topological domain, extracellular. A helical membrane pass occupies residues 586-606 (SLLLLLAYAFYVFTMKWNKHI). The Cytoplasmic portion of the chain corresponds to 607–907 (EVWVKEQLSR…SLDWPETRQK (301 aa)). At serine 658 the chain carries Phosphoserine. A disordered region spans residues 690 to 901 (EKEEESLNQG…GNEEPLSLDW (212 aa)). Threonine 724 bears the Phosphothreonine mark. Positions 757–769 (PGEEGETAGEGET) are enriched in acidic residues. 2 stretches are compositionally biased toward basic and acidic residues: residues 813–825 (EIHAEDGEMKGNE) and 835–849 (AENHGEAKNDEKGVE). Over residues 857-892 (GDSEEEEEEEEEQEEEEEEEEQEEEEEEEEEEEEKG) the composition is skewed to acidic residues. A helical transmembrane segment spans residues 908–928 (QAIYLFLLPIVFPLWLTVPDV). Residues 929 to 935 (RRQESRK) are Extracellular-facing. The helical transmembrane segment at 936–956 (FFVFTFLGSIMWIAMFSYLMV) threads the bilayer. Residues 957–971 (WWAHQVGETIGISEE) are Cytoplasmic-facing. Residues 972 to 992 (IMGLTILAAGTSIPDLITSVI) traverse the membrane as a helical segment. Residues 979–1010 (AAGTSIPDLITSVIVARKGLGDMAVSSSVGSN) form an Alpha-2 repeat. Topologically, residues 993-1010 (VARKGLGDMAVSSSVGSN) are extracellular. Residues 1011-1031 (IFDITVGLPVPWLLFSLINGL) traverse the membrane as a helical segment. At 1032 to 1039 (QPVPVSSN) the chain is on the cytoplasmic side. Residues 1040-1060 (GLFCAIVLLFLMLLFVISSIA) form a helical membrane-spanning segment. Over 1061 to 1068 (SCKWRMNK) the chain is Extracellular. The helical transmembrane segment at 1069–1089 (ILGFTMFLLYFVFLIISVMLE) threads the bilayer. The Cytoplasmic portion of the chain corresponds to 1090–1099 (DRIISCPVSV).

This sequence belongs to the Ca(2+):cation antiporter (CaCA) (TC 2.A.19) family. SLC24A subfamily. Post-translationally, the uncleaved signal sequence is required for efficient membrane targeting and proper membrane integration. In terms of tissue distribution, expressed in the retina, particularly in the inner segment, outer and inner nuclear layers, and ganglion cell layer.

It localises to the cell membrane. The catalysed reaction is Ca(2+)(out) + K(+)(out) + 4 Na(+)(in) = Ca(2+)(in) + K(+)(in) + 4 Na(+)(out). In terms of biological role, calcium, potassium:sodium antiporter that transports 1 Ca(2+) and 1 K(+) in exchange for 4 Na(+). Critical component of the visual transduction cascade, controlling the calcium concentration of outer segments during light and darkness. Light causes a rapid lowering of cytosolic free calcium in the outer segment of both retinal rod and cone photoreceptors and the light-induced lowering of calcium is caused by extrusion via this protein which plays a key role in the process of light adaptation. In Homo sapiens (Human), this protein is Sodium/potassium/calcium exchanger 1.